The sequence spans 414 residues: Nuclear localization sequence-binding protein (414 aa).

Disordered stretches follow at residues 1 to 172 (MAKT…TIFV), 244 to 264 (STSK…TPSE), and 336 to 414 (RPVR…KTFD). Positions 10 to 26 (NKKEVKASKQAKEEKAK) are enriched in basic and acidic residues. Low complexity-rich tracts occupy residues 27 to 44 (AVSS…SSSE) and 54 to 73 (ESSS…SSSD). A compositionally biased stretch (basic and acidic residues) spans 78-87 (AETKKEESKD). A phosphoserine mark is found at serine 93, serine 95, serine 96, serine 97, serine 116, serine 127, serine 129, serine 131, and serine 143. A compositionally biased stretch (acidic residues) spans 96 to 105 (SSDEEEEEEK). Over residues 106-117 (EETKKEESKESS) the composition is skewed to basic and acidic residues. Low complexity predominate over residues 118-128 (SSDSSSSSSSD). Residues 134–144 (EESNDKKRKSE) show a composition bias toward basic and acidic residues. 2 RRM domains span residues 168–246 (ATIF…MSTS) and 267–345 (DTLF…FSSP). The span at 351–386 (GGRGGSRGFGGRGGGRGGNRGFGGRGGARGGRGGFR) shows a compositional bias: gly residues. Arginine 353 carries the post-translational modification Omega-N-methylarginine. Residues 353-384 (RGGSRGFGGRGGGRGGNRGFGGRGGARGGRGG) form an RGG-box region. An asymmetric dimethylarginine; by HMT1; alternate mark is found at arginine 357, arginine 362, and arginine 366. 3 positions are modified to omega-N-methylarginine; by HMT1; alternate: arginine 357, arginine 362, and arginine 366. The segment at 366-384 (RGGNRGFGGRGGARGGRGG) is RNA-binding RGG-box. Residue arginine 370 is modified to Omega-N-methylarginine. An asymmetric dimethylarginine; by HMT1; alternate mark is found at arginine 375, arginine 379, and arginine 382. Omega-N-methylarginine; by HMT1; alternate occurs at positions 375, 379, and 382. Position 386 is an omega-N-methylarginine (arginine 386).

It belongs to the RRM GAR family. Post-translationally, methylated by HMT1, forming asymmetric dimethylarginines (DMA) within a domain referred to as an RGG box, made up of repeated Gly-Gly dipeptides interspersed with Arg and aromatic residues. Pyrophosphorylated by 5-diphosphoinositol pentakisphosphate (5-IP7). Serine pyrophosphorylation is achieved by Mg(2+)-dependent, but enzyme independent transfer of a beta-phosphate from a inositol pyrophosphate to a pre-phosphorylated serine residue.

It localises to the nucleus. Its subcellular location is the nucleolus. Involved in pre-rRNA processing. Specifically binds nuclear localization sequences. Candidate for a receptor at the nucleus that may be involved in both RNA and protein transport. Binds telomeric sequences of the type (TG[1-3])n in vitro. The protein is Nuclear localization sequence-binding protein of Saccharomyces cerevisiae (strain ATCC 204508 / S288c) (Baker's yeast).